Here is a 155-residue protein sequence, read N- to C-terminus: Small ribosomal subunit protein uS7cz/uS7cy (155 aa).

It belongs to the universal ribosomal protein uS7 family. As to quaternary structure, part of the 30S ribosomal subunit.

The protein localises to the plastid. The protein resides in the chloroplast. In terms of biological role, one of the primary rRNA binding proteins, it binds directly to 16S rRNA where it nucleates assembly of the head domain of the 30S subunit. The polypeptide is Small ribosomal subunit protein uS7cz/uS7cy (rps7-A) (Cucumis sativus (Cucumber)).